Here is a 184-residue protein sequence, read N- to C-terminus: MSVKNAMTADFLRSAYGGESMAHMRYLIWGEEAENSNYPNIGRLFKAIAYSEHIHAKNHFNVLKEDLYDSSVVAGAVFGSTNLIDNLQGAINGELHEIKQMYPVYLETARYQEEKEAERTFHYALEAEKIHAKLFQDAQDSAKENKDINIGKVYICPVCGFTTLDENIEQCPICGVKKDKFQAF.

The region spanning 2–146 (SVKNAMTADF…DAQDSAKENK (145 aa)) is the Ferritin-like diiron domain. Positions 19, 52, 94, 97, 128, 131, 156, 159, 171, and 174 each coordinate Fe(3+). One can recognise a Rubredoxin-like domain in the interval 151–184 (GKVYICPVCGFTTLDENIEQCPICGVKKDKFQAF).

Fe(3+) is required as a cofactor.

It carries out the reaction H2O2 + NADH + H(+) = NAD(+) + 2 H2O. Rubredoxin (Rd) increases the NADH consumption rate by serving as an intermediary electron-transfer shuttle between NROR and Rbr2. In terms of biological role, functions as the terminal component of an NADH peroxidase (NADH:H(2)O(2) oxidoreductase) when using NADH:rubredoxin oxidoreductase (NROR) as the electron transport intermediary from NADH to Rbr2. This Clostridium acetobutylicum (strain ATCC 824 / DSM 792 / JCM 1419 / IAM 19013 / LMG 5710 / NBRC 13948 / NRRL B-527 / VKM B-1787 / 2291 / W) protein is Rubrerythrin-2 (rbr2).